Here is a 177-residue protein sequence, read N- to C-terminus: Adenine phosphoribosyltransferase (177 aa).

The protein belongs to the purine/pyrimidine phosphoribosyltransferase family. Homodimer.

The protein localises to the cytoplasm. The catalysed reaction is AMP + diphosphate = 5-phospho-alpha-D-ribose 1-diphosphate + adenine. It functions in the pathway purine metabolism; AMP biosynthesis via salvage pathway; AMP from adenine: step 1/1. Functionally, catalyzes a salvage reaction resulting in the formation of AMP, that is energically less costly than de novo synthesis. The sequence is that of Adenine phosphoribosyltransferase from Chlorobium phaeobacteroides (strain DSM 266 / SMG 266 / 2430).